We begin with the raw amino-acid sequence, 188 residues long: Large ribosomal subunit protein eL18 (188 aa).

The interval 143 to 188 is disordered; sequence RSAREAEKHFGPAPGVPHSHTKPHVRSKGRKFERARGRRASRAYKN. Composition is skewed to basic residues over residues 161-171 and 178-188; these read SHTKPHVRSKG and RGRRASRAYKN.

The protein belongs to the eukaryotic ribosomal protein eL18 family.

Its subcellular location is the cytoplasm. This is Large ribosomal subunit protein eL18 (rpl-18) from Caenorhabditis briggsae.